Here is a 1298-residue protein sequence, read N- to C-terminus: MAAADAEAVPARGEPQQDCCVKTELLGEETPMAADEGSAEKQAGEAHMAADGETNGSCENSDASSHANAAKHTQDSARVNPQDGTNTLTRIAENGVSERDSEAAKQNHVTADDFVQTSVIGSNGYILNKPALQAQPLRTTSTLASSLPGHAAKTLPGGAGKGRTPSAFPQTPAAPPATLGEGSADTEDRKLPAPGADVKVHRARKTMPKSVVGLHAASKDPREVREARDHKEPKEEINKNISDFGRQQLLPPFPSLHQSLPQNQCYMATTKSQTACLPFVLAAAVSRKKKRRMGTYSLVPKKKTKVLKQRTVIEMFKSITHSTVGSKGEKDLGASSLHVNGESLEMDSDEDDSEELEEDDGHGAEQAAAFPTEDSRTSKESMSEADRAQKMDGESEEEQESVDTGEEEEGGDESDLSSESSIKKKFLKRKGKTDSPWIKPARKRRRRSRKKPSGALGSESYKSSAGSAEQTAPGDSTGYMEVSLDSLDLRVKGILSSQAEGLANGPDVLETDGLQEVPLCSCRMETPKSREITTLANNQCMATESVDHELGRCTNSVVKYELMRPSNKAPLLVLCEDHRGRMVKHQCCPGCGYFCTAGNFMECQPESSISHRFHKDCASRVNNASYCPHCGEESSKAKEVTIAKADTTSTVTPVPGQEKGSALEGRADTTTGSAAGPPLSEDDKLQGAASHVPEGFDPTGPAGLGRPTPGLSQGPGKETLESALIALDSEKPKKLRFHPKQLYFSARQGELQKVLLMLVDGIDPNFKMEHQNKRSPLHAAAEAGHVDICHMLVQAGANIDTCSEDQRTPLMEAAENNHLEAVKYLIKAGALVDPKDAEGSTCLHLAAKKGHYEVVQYLLSNGQMDVNCQDDGGWTPMIWATEYKHVDLVKLLLSKGSDINIRDNEENICLHWAAFSGCVDIAEILLAAKCDLHAVNIHGDSPLHIAARENRYDCVVLFLSRDSDVTLKNKEGETPLQCASLNSQVWSALQMSKALQDSAPDRPSPVERIVSRDIARGYERIPIPCVNAVDSEPCPSNYKYVSQNCVTSPMNIDRNITHLQYCVCIDDCSSSNCMCGQLSMRCWYDKDGRLLPEFNMAEPPLIFECNHACSCWRNCRNRVVQNGLRARLQLYRTRDMGWGVRSLQDIPPGTFVCEYVGELISDSEADVREEDSYLFDLDNKDGEVYCIDARFYGNVSRFINHHCEPNLVPVRVFMAHQDLRFPRIAFFSTRLIEAGEQLGFDYGERFWDIKGKLFSCRCGSPKCRHSSAALAQRQASAAQEAQEDGLPDTSSAAAADPL.

Disordered stretches follow at residues M1 to A111 and A144 to P192. A2 is subject to N-acetylalanine. Residue K22 forms a Glycyl lysine isopeptide (Lys-Gly) (interchain with G-Cter in SUMO1); alternate linkage. A Glycyl lysine isopeptide (Lys-Gly) (interchain with G-Cter in SUMO2); alternate cross-link involves residue K22. Over residues S38–A50 the composition is skewed to basic and acidic residues. 2 stretches are compositionally biased toward polar residues: residues T54–A67 and S76–T89. Positions V96–K105 are enriched in basic and acidic residues. Residues K190, K199, K231, K234, K317, and K327 each participate in a glycyl lysine isopeptide (Lys-Gly) (interchain with G-Cter in SUMO2) cross-link. The disordered stretch occupies residues V211–K234. Basic and acidic residues predominate over residues A217–K234. The interval V339–Y479 is disordered. Positions L344–D360 are enriched in acidic residues. The segment covering E373 to G393 has biased composition (basic and acidic residues). Residues E394–L416 are compositionally biased toward acidic residues. K432 is covalently cross-linked (Glycyl lysine isopeptide (Lys-Gly) (interchain with G-Cter in SUMO2)). S435 carries the phosphoserine modification. A compositionally biased stretch (basic residues) spans P440–P452. Polar residues predominate over residues S460–G474. At S483 the chain carries Phosphoserine. Residues K492, K559, K644, K659, K684, and K731 each participate in a glycyl lysine isopeptide (Lys-Gly) (interchain with G-Cter in SUMO2) cross-link. Residues K644–K717 are disordered. ANK repeat units lie at residues F737–F766, N772–T801, D805–P834, E838–C868, G872–I901, E905–A934, H938–L967, and E971–S1004. The interval E905–N907 is histone H3K9me binding. Phosphoserine occurs at positions 1004 and 1048. A Pre-SET domain is found at Q1060–G1123. 9 residues coordinate Zn(2+): C1062, C1064, C1068, C1073, C1075, C1105, C1109, C1111, and C1115. The SET domain maps to A1126–G1243. Residues M1136–W1138, Y1173, and N1200–H1201 each bind S-adenosyl-L-methionine. The interaction with histone H3 stretch occupies residues D1162–D1181. C1203 contributes to the Zn(2+) binding site. The segment at Y1242 to R1245 is interaction with histone H3. C1256 contributes to the Zn(2+) binding site. R1257 lines the S-adenosyl-L-methionine pocket. C1258 and C1263 together coordinate Zn(2+). Positions Q1274–L1298 are disordered.

Belongs to the class V-like SAM-binding methyltransferase superfamily. As to quaternary structure, heterodimer; heterodimerizes with EHMT2. Interacts with WIZ and EHMT2. Part of the E2F6.com-1 complex in G0 phase composed of E2F6, MGA, MAX, TFDP1, CBX3, BAT8, EHMT1, RING1, RNF2, MBLR, L3MBTL2 and YAF2. Interacts (via ANK repeats) with RELA (when monomethylated at 'Lys-310'). Interacts with MPHOSPH8. Interacts with CDYL. Interacts with REST only in the presence of CDYL. Part of a complex containing at least CDYL, REST, WIZ, SETB1, EHMT1 and EHMT2. Interacts with BAZ2B. As to expression, widely expressed.

It is found in the nucleus. The protein localises to the chromosome. It carries out the reaction N(6)-methyl-L-lysyl(9)-[histone H3] + S-adenosyl-L-methionine = N(6),N(6)-dimethyl-L-lysyl(9)-[histone H3] + S-adenosyl-L-homocysteine + H(+). It catalyses the reaction L-lysyl(9)-[histone H3] + S-adenosyl-L-methionine = N(6)-methyl-L-lysyl(9)-[histone H3] + S-adenosyl-L-homocysteine + H(+). Its activity is regulated as follows. Methyltransferase activity is inhibited by BIX-01294. Efficiently inhibited by compound E72, a BIX-01294 derivative in which the diazepane ring and the benzyl are replaced with a 3-dimethylaminopropyl and a 5-aminopentyl group at sites B and C, respectively. In terms of biological role, histone methyltransferase that specifically mono- and dimethylates 'Lys-9' of histone H3 (H3K9me1 and H3K9me2, respectively) in euchromatin. H3K9me represents a specific tag for epigenetic transcriptional repression by recruiting HP1 proteins to methylated histones. Also weakly methylates 'Lys-27' of histone H3 (H3K27me). Also required for DNA methylation, the histone methyltransferase activity is not required for DNA methylation, suggesting that these 2 activities function independently. Probably targeted to histone H3 by different DNA-binding proteins like E2F6, MGA, MAX and/or DP1. During G0 phase, it probably contributes to silencing of MYC- and E2F-responsive genes, suggesting a role in G0/G1 transition in cell cycle. In addition to the histone methyltransferase activity, also methylates non-histone proteins: mediates dimethylation of 'Lys-373' of p53/TP53. Represses the expression of mitochondrial function-related genes, perhaps by occupying their promoter regions, working in concert with probable chromatin reader BAZ2B. The sequence is that of Histone-lysine N-methyltransferase EHMT1 (EHMT1) from Homo sapiens (Human).